The primary structure comprises 202 residues: Ras-related protein Rab-2B (202 aa).

31 to 38 (GDSAVGKS) contributes to the GTP binding site. The short motif at 53–61 (SDFTIGVEF) is the Effector region element. GTP contacts are provided by residues 79–83 (DTAGQ) and 137–140 (NKAD).

Belongs to the small GTPase superfamily. Rab family. In terms of processing, this sequence lacks the C-terminal cysteine motifs subject to isoprenylation in other Rab proteins.

The sequence is that of Ras-related protein Rab-2B (rab2B) from Dictyostelium discoideum (Social amoeba).